Here is a 272-residue protein sequence, read N- to C-terminus: Shikimate dehydrogenase (NADP(+)) (272 aa).

Shikimate is bound by residues 19 to 21 and threonine 66; that span reads SLS. Lysine 70 serves as the catalytic Proton acceptor. Glutamate 82 contacts NADP(+). The shikimate site is built by asparagine 91 and aspartate 106. NADP(+) contacts are provided by residues 129–133, 151–156, and isoleucine 214; these read GAGGA and NRTPEK. A shikimate-binding site is contributed by tyrosine 216. Position 237 (glycine 237) interacts with NADP(+).

It belongs to the shikimate dehydrogenase family. As to quaternary structure, homodimer.

The enzyme catalyses shikimate + NADP(+) = 3-dehydroshikimate + NADPH + H(+). The protein operates within metabolic intermediate biosynthesis; chorismate biosynthesis; chorismate from D-erythrose 4-phosphate and phosphoenolpyruvate: step 4/7. Functionally, involved in the biosynthesis of the chorismate, which leads to the biosynthesis of aromatic amino acids. Catalyzes the reversible NADPH linked reduction of 3-dehydroshikimate (DHSA) to yield shikimate (SA). The polypeptide is Shikimate dehydrogenase (NADP(+)) (Thermococcus kodakarensis (strain ATCC BAA-918 / JCM 12380 / KOD1) (Pyrococcus kodakaraensis (strain KOD1))).